A 250-amino-acid chain; its full sequence is Probable transcriptional regulatory protein tll0175 (250 aa).

Belongs to the TACO1 family.

The protein localises to the cytoplasm. The chain is Probable transcriptional regulatory protein tll0175 from Thermosynechococcus vestitus (strain NIES-2133 / IAM M-273 / BP-1).